The sequence spans 397 residues: Carnitine transport ATP-binding protein OpuCA (397 aa).

The ABC transporter domain occupies 2–236 (LKFEHVTKTY…PANSFVEDFI (235 aa)). 35-42 (GPSGCGKT) is an ATP binding site. 2 CBS domains span residues 255–311 (MNTN…ATSV) and 315–373 (IEKN…WGTL). Residues 377 to 397 (TENQEEQADSKTTEPEMKQEG) form a disordered region. The span at 384–397 (ADSKTTEPEMKQEG) shows a compositional bias: basic and acidic residues.

It belongs to the ABC transporter superfamily. In terms of assembly, the complex is composed of two ATP-binding proteins (OpuCA), two transmembrane proteins (OpuCB and OpuCD) and a solute-binding protein (OpuCC).

The catalysed reaction is a quaternary ammonium(out) + ATP + H2O = a quaternary ammonium(in) + ADP + phosphate + H(+). Functionally, part of the ABC transporter complex OpuCABCD involved in carnitine uptake. Probably responsible for energy coupling to the transport system. Involved, with BetL and GbuABC, in osmoprotection and cryoprotection of Listeria. Can also mediate weak glycine betaine transport. This chain is Carnitine transport ATP-binding protein OpuCA (opuCA), found in Listeria monocytogenes serotype 1/2a (strain 10403S).